The primary structure comprises 520 residues: Ribonuclease Y (520 aa).

Residues 3–23 (IEIQWIGIGAAFLVGAIGGAL) traverse the membrane as a helical segment. The region spanning 210–273 (AVSVVPLPND…EVARLALERL (64 aa)) is the KH domain. The region spanning 336–429 (VLQHSIEVAF…VQAADALSGA (94 aa)) is the HD domain.

It belongs to the RNase Y family.

The protein resides in the cell membrane. In terms of biological role, endoribonuclease that initiates mRNA decay. The chain is Ribonuclease Y from Syntrophotalea carbinolica (strain DSM 2380 / NBRC 103641 / GraBd1) (Pelobacter carbinolicus).